A 164-amino-acid chain; its full sequence is Pheromone-binding protein (164 aa).

The first 22 residues, 1-22 (MSIQGQIALALMVNMAVGSVDA), serve as a signal peptide directing secretion. 3 disulfides stabilise this stretch: Cys-41-Cys-76, Cys-72-Cys-130, and Cys-119-Cys-139.

This sequence belongs to the PBP/GOBP family. As to quaternary structure, homodimer. In terms of tissue distribution, antenna.

In terms of biological role, this major soluble protein in olfactory sensilla of male moths serves to solubilize the extremely hydrophobic pheromone molecules such as bombykol and to transport pheromone through the aqueous lymph to receptors located on olfactory cilia. In Bombyx mori (Silk moth), this protein is Pheromone-binding protein.